Here is a 130-residue protein sequence, read N- to C-terminus: Cytochrome c-type biogenesis protein CcmE (130 aa).

Over 1 to 7 the chain is Cytoplasmic; it reads MKKKHKR. A helical; Signal-anchor for type II membrane protein membrane pass occupies residues 8–28; that stretch reads LLITSGIFCFLSCAVFFILTT. The Extracellular segment spans residues 29 to 130; sequence LKENISFFYT…DENYKPKVLK (102 aa). Positions 120 and 124 each coordinate heme.

The protein belongs to the CcmE/CycJ family.

It is found in the cell membrane. Its function is as follows. Heme chaperone required for the biogenesis of c-type cytochromes. Transiently binds heme delivered by CcmC and transfers the heme to apo-cytochromes in a process facilitated by CcmF and CcmH. The chain is Cytochrome c-type biogenesis protein CcmE from Wolbachia pipientis subsp. Culex pipiens (strain wPip).